We begin with the raw amino-acid sequence, 99 residues long: MIKLRLRRMGKKRQPHYRIVAAEARWPRDGRFIEVIGYYNPRTDPYTLEVNVERARWWLEHGAQPTDTVRALLVRAGVLPPRQQNEAKRETAETAQPEA.

The tract at residues P80 to A99 is disordered.

This sequence belongs to the bacterial ribosomal protein bS16 family.

The chain is Small ribosomal subunit protein bS16 from Thermomicrobium roseum (strain ATCC 27502 / DSM 5159 / P-2).